The chain runs to 448 residues: 5-hydroxytryptamine receptor 7 (448 aa).

Over 1 to 86 (MMDVNSSGRP…INYGRVEKVV (86 aa)) the chain is Extracellular. N-linked (GlcNAc...) asparagine glycosylation is found at N5 and N69. A helical membrane pass occupies residues 87–111 (IGSILTLITLLTIAGNCLVVISVCF). At 112–121 (VKKLRQPSNY) the chain is on the cytoplasmic side. A helical transmembrane segment spans residues 122–143 (LIVSLALADLSVAVAVMPFVSV). Topologically, residues 144–155 (TDLIGGKWIFGH) are extracellular. A helical membrane pass occupies residues 156-181 (FFCNVFIAMDVMCCTASIMTLCVISI). C158 and C234 are disulfide-bonded. Residue D165 participates in serotonin binding. Residues 182 to 201 (DRYLGITRPLTYPVRQNGKC) lie on the Cytoplasmic side of the membrane. Residues 202-222 (MAKMILSVWLLSASITLPPLF) traverse the membrane as a helical segment. At 223-240 (GWAQNVNDDKVCLISQDF) the chain is on the extracellular side. Residues 241 to 263 (GYTIYSTAVAFYIPMSVMLFMYY) traverse the membrane as a helical segment. Residues 264-329 (QIYKAARKSA…SIFKREQKAA (66 aa)) lie on the Cytoplasmic side of the membrane. The chain crosses the membrane as a helical span at residues 330 to 355 (TTLGIIVGAFTVCWLPFFLLSTARPF). Residues 356-366 (ICGTSCSCIPL) are Extracellular-facing. A helical transmembrane segment spans residues 367-390 (WVERTCLWLGYANSLINPFIYAFF). Over 391–448 (NRDLRTTYRSLLQCQYRNINRKLSAAGMHEALKLAERPERSEFVLQNSDHCGKKGHDT) the chain is Cytoplasmic. C404 is lipidated: S-palmitoyl cysteine.

This sequence belongs to the G-protein coupled receptor 1 family. In terms of tissue distribution, thalamus, hypothalamus, and the hippocampal rudiments.

It is found in the cell membrane. In terms of biological role, G-protein coupled receptor for 5-hydroxytryptamine (serotonin), a biogenic hormone that functions as a neurotransmitter, a hormone and a mitogen. Ligand binding causes a conformation change that triggers signaling via guanine nucleotide-binding proteins (G proteins) and modulates the activity of downstream effectors. HTR7 is coupled to G(s) G alpha proteins and mediates activation of adenylate cyclase activity. The sequence is that of 5-hydroxytryptamine receptor 7 from Rattus norvegicus (Rat).